A 281-amino-acid polypeptide reads, in one-letter code: Large ribosomal subunit protein uL2 (281 aa).

A disordered region spans residues 210 to 281; sequence RTRYAGQRPH…RGRKRGPHTR (72 aa). Positions 254–281 are enriched in basic residues; sequence TVGKKTRSHKARSNKFIVRGRKRGPHTR.

Belongs to the universal ribosomal protein uL2 family. In terms of assembly, part of the 50S ribosomal subunit. Forms a bridge to the 30S subunit in the 70S ribosome.

One of the primary rRNA binding proteins. Required for association of the 30S and 50S subunits to form the 70S ribosome, for tRNA binding and peptide bond formation. It has been suggested to have peptidyltransferase activity; this is somewhat controversial. Makes several contacts with the 16S rRNA in the 70S ribosome. This chain is Large ribosomal subunit protein uL2, found in Limosilactobacillus reuteri subsp. reuteri (strain JCM 1112) (Lactobacillus reuteri).